The chain runs to 210 residues: Glutathione S-transferase mdpJ (210 aa).

The 82-residue stretch at 2–83 folds into the GST N-terminal domain; that stretch reads SFGTLYTHNP…YCNDERSSLR (82 aa). One can recognise a GST C-terminal domain in the interval 77-200; it reads DERSSLRILQ…VAGGVPDLGL (124 aa).

It belongs to the GST superfamily.

It functions in the pathway secondary metabolite biosynthesis. Its function is as follows. Glutathione S-transferase; part of the gene cluster that mediates the biosynthesis of monodictyphenone, a prenyl xanthone derivative. The pathway begins with the synthesis of atrochrysone thioester by the polyketide synthase (PKS) mdpG. The atrochrysone carboxyl ACP thioesterase mdpF then breaks the thioester bond and releases the atrochrysone carboxylic acid from mdpG. The atrochrysone carboxylic acid is then converted to atrochrysone which is further transformed into emodin anthrone. The next step is performed by the anthrone oxygenase mdpH that catalyzes the oxidation of emodinanthrone to emodin. Emodin is further modified to yield monodictyphenone via several steps involving mdpB, mdpC mdpJ, mdpK and mdpL. These enzymes with xptA, xptB and xptC are also proposed to be involved in the synthesis of shamixanthone from emodin. Especially, direct reduction of emodin by the short chain dehydrogenase mdpC followed by dehydration catalyzed by the scytalone dehydratase-like protein mdpB gives loss of oxygen and formation of chrysophanol intermediate in two simple steps. This chain is Glutathione S-transferase mdpJ, found in Emericella nidulans (strain FGSC A4 / ATCC 38163 / CBS 112.46 / NRRL 194 / M139) (Aspergillus nidulans).